Consider the following 145-residue polypeptide: MRHRVSGRKLNRTTSHLLAMLANMSVSLIQHEQINTTLPKAKELRPFVEKLITVAKKGNLNARRYLISKIKNEIAVEKLMTTLAPRYAERHGGYIRILKAGFRYGDMAPMAYIEFVDRNIESKGKEFKALKNDARNAKLIAEQSN.

The protein belongs to the bacterial ribosomal protein bL17 family. Part of the 50S ribosomal subunit. Contacts protein L32.

The chain is Large ribosomal subunit protein bL17 from Orientia tsutsugamushi (strain Boryong) (Rickettsia tsutsugamushi).